Reading from the N-terminus, the 312-residue chain is DNA primase small subunit PriS (312 aa).

Active-site residues include D88, D90, and D215.

It belongs to the eukaryotic-type primase small subunit family. Heterodimer of a small subunit (PriS) and a large subunit (PriL). Requires Mg(2+) as cofactor. Mn(2+) serves as cofactor.

Functionally, catalytic subunit of DNA primase, an RNA polymerase that catalyzes the synthesis of short RNA molecules used as primers for DNA polymerase during DNA replication. The small subunit contains the primase catalytic core and has DNA synthesis activity on its own. Binding to the large subunit stabilizes and modulates the activity, increasing the rate of DNA synthesis while decreasing the length of the DNA fragments, and conferring RNA synthesis capability. The DNA polymerase activity may enable DNA primase to also catalyze primer extension after primer synthesis. May also play a role in DNA repair. The sequence is that of DNA primase small subunit PriS from Pyrobaculum arsenaticum (strain DSM 13514 / JCM 11321 / PZ6).